A 497-amino-acid chain; its full sequence is Serine hydroxymethyltransferase (497 aa).

(6S)-5,6,7,8-tetrahydrofolate contacts are provided by residues Leu-176 and Gly-180–Leu-182. The residue at position 289 (Lys-289) is an N6-(pyridoxal phosphate)lysine.

Belongs to the SHMT family. As to quaternary structure, homodimer. Pyridoxal 5'-phosphate serves as cofactor.

The protein localises to the cytoplasm. The enzyme catalyses (6R)-5,10-methylene-5,6,7,8-tetrahydrofolate + glycine + H2O = (6S)-5,6,7,8-tetrahydrofolate + L-serine. Its pathway is one-carbon metabolism; tetrahydrofolate interconversion. It functions in the pathway amino-acid biosynthesis; glycine biosynthesis; glycine from L-serine: step 1/1. In terms of biological role, catalyzes the reversible interconversion of serine and glycine with tetrahydrofolate (THF) serving as the one-carbon carrier. This reaction serves as the major source of one-carbon groups required for the biosynthesis of purines, thymidylate, methionine, and other important biomolecules. Also exhibits THF-independent aldolase activity toward beta-hydroxyamino acids, producing glycine and aldehydes, via a retro-aldol mechanism. The chain is Serine hydroxymethyltransferase from Chlamydia abortus (strain DSM 27085 / S26/3) (Chlamydophila abortus).